A 58-amino-acid polypeptide reads, in one-letter code: Large ribosomal subunit protein bL32c (58 aa).

Disordered stretches follow at residues 1 to 21 (MAVP…SQWM) and 34 to 58 (LAGR…MQPN). Positions 44-58 (QMQPTQMQPTQMQPN) are enriched in low complexity.

This sequence belongs to the bacterial ribosomal protein bL32 family.

The protein localises to the plastid. It is found in the chloroplast. The polypeptide is Large ribosomal subunit protein bL32c (Cyanidioschyzon merolae (strain NIES-3377 / 10D) (Unicellular red alga)).